The primary structure comprises 151 residues: Large ribosomal subunit protein uL15 (151 aa).

The disordered stretch occupies residues 1-60; it reads MAENNPLKIHNLRPAPGAKTAKTRVGRGEASKGKTAGRGTKGTKARYQVPERFEGGQMPL.

It belongs to the universal ribosomal protein uL15 family. As to quaternary structure, part of the 50S ribosomal subunit.

Its function is as follows. Binds to the 23S rRNA. The chain is Large ribosomal subunit protein uL15 from Streptomyces coelicolor (strain ATCC BAA-471 / A3(2) / M145).